The chain runs to 269 residues: Formamidopyrimidine-DNA glycosylase (269 aa).

Proline 2 functions as the Schiff-base intermediate with DNA in the catalytic mechanism. Catalysis depends on glutamate 3, which acts as the Proton donor. Lysine 57 (proton donor; for beta-elimination activity) is an active-site residue. Histidine 90, arginine 109, and lysine 150 together coordinate DNA. The FPG-type zinc-finger motif lies at 235–269 (QVYGRKGEPCRVCGTPIVATKHAQRATFYCRQCQK). Residue arginine 259 is the Proton donor; for delta-elimination activity of the active site.

This sequence belongs to the FPG family. As to quaternary structure, monomer. Zn(2+) is required as a cofactor.

It catalyses the reaction Hydrolysis of DNA containing ring-opened 7-methylguanine residues, releasing 2,6-diamino-4-hydroxy-5-(N-methyl)formamidopyrimidine.. It carries out the reaction 2'-deoxyribonucleotide-(2'-deoxyribose 5'-phosphate)-2'-deoxyribonucleotide-DNA = a 3'-end 2'-deoxyribonucleotide-(2,3-dehydro-2,3-deoxyribose 5'-phosphate)-DNA + a 5'-end 5'-phospho-2'-deoxyribonucleoside-DNA + H(+). In terms of biological role, involved in base excision repair of DNA damaged by oxidation or by mutagenic agents. Acts as a DNA glycosylase that recognizes and removes damaged bases. Has a preference for oxidized purines, such as 7,8-dihydro-8-oxoguanine (8-oxoG). Has AP (apurinic/apyrimidinic) lyase activity and introduces nicks in the DNA strand. Cleaves the DNA backbone by beta-delta elimination to generate a single-strand break at the site of the removed base with both 3'- and 5'-phosphates. The sequence is that of Formamidopyrimidine-DNA glycosylase from Escherichia coli (strain K12 / MC4100 / BW2952).